Here is a 92-residue protein sequence, read N- to C-terminus: Small ribosomal subunit protein uS17 (92 aa).

This sequence belongs to the universal ribosomal protein uS17 family. As to quaternary structure, part of the 30S ribosomal subunit.

Its function is as follows. One of the primary rRNA binding proteins, it binds specifically to the 5'-end of 16S ribosomal RNA. The sequence is that of Small ribosomal subunit protein uS17 from Cupriavidus necator (strain ATCC 17699 / DSM 428 / KCTC 22496 / NCIMB 10442 / H16 / Stanier 337) (Ralstonia eutropha).